The sequence spans 75 residues: DNA-directed RNA polymerase subunit omega (75 aa).

Belongs to the RNA polymerase subunit omega family. In cyanobacteria the RNAP catalytic core is composed of 2 alpha, 1 beta, 1 beta', 1 gamma and 1 omega subunit. When a sigma factor is associated with the core the holoenzyme is formed, which can initiate transcription.

It catalyses the reaction RNA(n) + a ribonucleoside 5'-triphosphate = RNA(n+1) + diphosphate. Promotes RNA polymerase assembly. Latches the N- and C-terminal regions of the beta' subunit thereby facilitating its interaction with the beta and alpha subunits. The sequence is that of DNA-directed RNA polymerase subunit omega from Synechococcus sp. (strain CC9605).